The sequence spans 1353 residues: Adenylate cyclase type 9 (1353 aa).

Disordered regions lie at residues Met-1–Ser-27 and Ser-51–Leu-73. Over Met-1–Arg-117 the chain is Cytoplasmic. Positions Glu-16 to Ser-27 are enriched in polar residues. Residues Ser-51–Arg-66 are compositionally biased toward low complexity. Residues Tyr-118–Met-138 traverse the membrane as a helical segment. Over Lys-139–Lys-141 the chain is Extracellular. The chain crosses the membrane as a helical span at residues Val-142–Phe-162. Over Thr-163–His-171 the chain is Cytoplasmic. The chain crosses the membrane as a helical span at residues Tyr-172–Phe-192. Residues Gln-193 to Asp-215 are Extracellular-facing. An N-linked (GlcNAc...) asparagine glycan is attached at Asn-206. The chain crosses the membrane as a helical span at residues Thr-216–Tyr-235. Over Thr-236 to Pro-241 the chain is Cytoplasmic. Residues Leu-242 to Phe-259 form a helical membrane-spanning segment. Over Gly-260–Glu-280 the chain is Extracellular. The helical transmembrane segment at Leu-281 to Met-301 threads the bilayer. At Ser-302–Ser-786 the chain is on the cytoplasmic side. Residues Gln-349–Ile-375 form a disordered region. The span at Lys-359 to Ser-374 shows a compositional bias: basic residues. The Mg(2+) site is built by Asp-399, Ile-400, and Asp-443. ATP-binding positions include Asp-399 to Thr-404, Leu-441 to Asp-443, and Arg-487. Disordered regions lie at residues Asp-596–Ser-615 and Ser-641–Leu-685. 2 positions are modified to phosphoserine: Ser-610 and Ser-613. Positions Ser-661–Leu-676 are enriched in polar residues. Residues Ser-688, Ser-691, and Ser-706 each carry the phosphoserine modification. The chain crosses the membrane as a helical span at residues Ser-787–Leu-807. At Lys-808–Pro-818 the chain is on the extracellular side. Residues Ala-819–Ile-839 traverse the membrane as a helical segment. The Cytoplasmic segment spans residues Arg-840–Cys-867. Residues Ile-868–Phe-888 traverse the membrane as a helical segment. At Glu-889–Asn-891 the chain is on the extracellular side. A helical transmembrane segment spans residues Ile-892–Phe-912. At Cys-913–Arg-920 the chain is on the cytoplasmic side. Residues Ser-921 to Gln-941 traverse the membrane as a helical segment. The Extracellular segment spans residues Asp-942 to Ala-975. Residues Asn-955 and Asn-964 are each glycosylated (N-linked (GlcNAc...) asparagine). The helical transmembrane segment at Ser-976–Leu-996 threads the bilayer. Residues Asn-997–Val-1353 lie on the Cytoplasmic side of the membrane. ATP contacts are provided by residues Lys-1108, Asp-1185–Trp-1187, Asn-1192–Arg-1196, and Lys-1232. Residues Ser-1257, Ser-1259, Ser-1295, Ser-1307, and Ser-1332 each carry the phosphoserine modification. The disordered stretch occupies residues Lys-1290–Glu-1314. Residues Thr-1299–Glu-1314 show a composition bias toward basic and acidic residues.

Belongs to the adenylyl cyclase class-4/guanylyl cyclase family. Mg(2+) serves as cofactor. Mn(2+) is required as a cofactor. In terms of tissue distribution, detected in brain, spleen, lung, liver and testis (at protein level). Detected in brain, especially in hippocampus, cerebellum and neocortex. Found in decreasing order in skeletal muscle, heart, adrenal gland, ovary and brain; and to a lesser extent, in kidney, liver, testis, lung, thymus and spleen.

The protein resides in the cell membrane. The enzyme catalyses ATP = 3',5'-cyclic AMP + diphosphate. With respect to regulation, insensitive to calcium/calmodulin, forskolin and somatostatin. Stimulated by beta-adrenergic receptor activation. Activity is down-regulated by calcium/calcineurin. In terms of biological role, adenylyl cyclase that catalyzes the formation of the signaling molecule cAMP in response to activation of G protein-coupled receptors. Contributes to signaling cascades activated by CRH (corticotropin-releasing factor), corticosteroids and by beta-adrenergic receptors. The polypeptide is Adenylate cyclase type 9 (Adcy9) (Mus musculus (Mouse)).